Consider the following 308-residue polypeptide: Porphobilinogen deaminase (308 aa).

Cys243 carries the post-translational modification S-(dipyrrolylmethanemethyl)cysteine.

The protein belongs to the HMBS family. Monomer. Requires dipyrromethane as cofactor.

The catalysed reaction is 4 porphobilinogen + H2O = hydroxymethylbilane + 4 NH4(+). It participates in porphyrin-containing compound metabolism; protoporphyrin-IX biosynthesis; coproporphyrinogen-III from 5-aminolevulinate: step 2/4. Tetrapolymerization of the monopyrrole PBG into the hydroxymethylbilane pre-uroporphyrinogen in several discrete steps. The chain is Porphobilinogen deaminase from Nitrosomonas europaea (strain ATCC 19718 / CIP 103999 / KCTC 2705 / NBRC 14298).